The primary structure comprises 619 residues: MPIQVLPPQLANQIAAGEVVERPASVVKELVENSLDAGATRIDIDIERGGAKLIRIRDNGSGIKKDELALALARHATSKIASLDDLEAIISLGFRGEALASISSVARLTLTSRTAEQQEAWQAYAEGRDQAVTVKPAAHPVGTTLEVLDLFYNTPARRKFMRTEKTEFGHIDEVVRRIALARFDVTINLNHNGKVIRQYRAVAQDGQRERRLGTICGAAFLEHALAIEWQHGDLTLRGWVADPLHTTPALAEIQYCYVNGRMMRDRLINHAIRQACEDKLGADQQPAFVLYLEIDPHQVDVNVHPAKHEVRFHQSRLVHDFIYQGVLSVLQQQLDAPLAEKDDPPTPRQMPENRIAAGGNQFARPSEAREAATRFSITSSREPAASGGSSGGASWPHAQPGYQKQQGALYRQLLDTPAAPRPAQPSAAPAELAGHSQSFGRVLTIVGGDCALLEREGSLALLSLTVAERWLRQAQLTPGTEAVCAQPLLIPLRLKVTEGEKRALAAAQSALTQLGIELHTDALHVTVRAVPLPLRQQNLQILIPELIGYLAQQNAFDVGNIAQWMARNLTSEQASWNMAQAIALLADVERLCPQLVKTPPGGLLQPVDLHSAMNALKDE.

A disordered region spans residues 358-401 (GGNQFARPSEAREAATRFSITSSREPAASGGSSGGASWPHAQPG).

It belongs to the DNA mismatch repair MutL/HexB family.

This protein is involved in the repair of mismatches in DNA. It is required for dam-dependent methyl-directed DNA mismatch repair. May act as a 'molecular matchmaker', a protein that promotes the formation of a stable complex between two or more DNA-binding proteins in an ATP-dependent manner without itself being part of a final effector complex. This chain is DNA mismatch repair protein MutL, found in Klebsiella pneumoniae (strain 342).